The following is a 317-amino-acid chain: Beta-ketoacyl-[acyl-carrier-protein] synthase III (317 aa).

Residues C112 and H244 contribute to the active site. Residues 245–249 form an ACP-binding region; sequence QANLR. N274 is an active-site residue.

It belongs to the thiolase-like superfamily. FabH family. In terms of assembly, homodimer.

The protein resides in the cytoplasm. It catalyses the reaction malonyl-[ACP] + acetyl-CoA + H(+) = 3-oxobutanoyl-[ACP] + CO2 + CoA. The protein operates within lipid metabolism; fatty acid biosynthesis. Its function is as follows. Catalyzes the condensation reaction of fatty acid synthesis by the addition to an acyl acceptor of two carbons from malonyl-ACP. Catalyzes the first condensation reaction which initiates fatty acid synthesis and may therefore play a role in governing the total rate of fatty acid production. Possesses both acetoacetyl-ACP synthase and acetyl transacylase activities. Its substrate specificity determines the biosynthesis of branched-chain and/or straight-chain of fatty acids. The sequence is that of Beta-ketoacyl-[acyl-carrier-protein] synthase III from Aliivibrio fischeri (strain ATCC 700601 / ES114) (Vibrio fischeri).